The sequence spans 72 residues: MRLVVCLVFLASFALVCQGGAQRGGFTGPIPRPPPHGRPPLGPICNACYRLSFSDVRICCNFLGKCCHLVKG.

Positions 1–21 are cleaved as a signal peptide; the sequence is MRLVVCLVFLASFALVCQGGA. Residue Gln-22 is modified to Pyrrolidone carboxylic acid. Intrachain disulfides connect Cys-45–Cys-59, Cys-48–Cys-66, and Cys-60–Cys-67. Lys-71 carries the post-translational modification Lysine amide.

The protein belongs to the penaeidin family.

The protein localises to the cytoplasmic granule. Antibacterial and antifungal activity. Presents chitin-binding activity. The protein is Penaeidin-2d of Penaeus setiferus (Atlantic white shrimp).